We begin with the raw amino-acid sequence, 127 residues long: Thioredoxin domain-containing protein 8 (127 aa).

The 126-residue stretch at 2-127 (VKRIKNMSEL…QLEKKIQELM (126 aa)) folds into the Thioredoxin domain. A disulfide bond links Cys32 and Cys35.

It belongs to the thioredoxin family. Testis-specific. Only expressed during spermiogenesis, prominently in the Golgi apparatus of pachytene spermatocytes and round and elongated spermatids, with a transient localization in the developing acrosome of round spermatids (at protein level).

It is found in the cytoplasm. The protein localises to the golgi apparatus. Functionally, may be required for post-translational modifications of proteins required for acrosomal biogenesis. May act by reducing disulfide bonds within the sperm. The protein is Thioredoxin domain-containing protein 8 (Txndc8) of Mus musculus (Mouse).